Consider the following 166-residue polypeptide: MGLFDKLFGSKENKSVEVEIYARISGEIVNIEDVPDVVFSEKIVGDGVAVRPIGNKIVAPVDGVIGKIFETNHAFSMESKEGVELFVHFGIDTVELKGEGFTRIAQEGQSVKRGDTVIEFDLALLESKAKSVLTPIVISNMDEISCIVKKSGEVVAGESVVLALKK.

Residues 36–140 enclose the PTS EIIA type-1 domain; that stretch reads DVVFSEKIVG…SVLTPIVISN (105 aa). Zn(2+) is bound by residues His-73 and His-88. His-88 acts as the Tele-phosphohistidine intermediate; for EIIA activity in catalysis. Position 88 is a phosphohistidine; by HPr (His-88).

Heterodimer with glycerol kinase (glpk). Requires Zn(2+) as cofactor.

The protein localises to the cytoplasm. Functionally, the phosphoenolpyruvate-dependent sugar phosphotransferase system (sugar PTS), a major carbohydrate active transport system, catalyzes the phosphorylation of incoming sugar substrates concomitantly with their translocation across the cell membrane. The enzyme II complex composed of PtsG and Crr is involved in glucose transport. The sequence is that of PTS system glucose-specific EIIA component (crr) from Haemophilus influenzae (strain ATCC 51907 / DSM 11121 / KW20 / Rd).